Reading from the N-terminus, the 334-residue chain is DGAT1/2-independent enzyme synthesizing storage lipids (334 aa).

Topologically, residues 1–50 (MTNKNQSFGVGQDSMSSMTCLIHVLEAWFGVEHLEDYWNFANYLLWVFTP) are lumenal. Residue Asn5 is glycosylated (N-linked (GlcNAc...) asparagine). Residues 51–71 (LLLLILPYFTIFLLYLTIIFL) form a helical membrane-spanning segment. Residues 72–125 (HIYKRKNVLKEAYSHNLWDGARKTVATLWDGHAAVWHGYEVHGMEKIPEEGPAL) lie on the Cytoplasmic side of the membrane. The helical transmembrane segment at 126 to 146 (IIFYHGAIPIDFYYFMAKIFI) threads the bilayer. Residue His130 is part of the active site. The Lumenal portion of the chain corresponds to 147–334 (HKGRTCRVVA…NKQKINQKTL (188 aa)).

The protein belongs to the diacylglycerol acyltransferase family. Highly divergent.

Its subcellular location is the endoplasmic reticulum membrane. It carries out the reaction a 1,2-diacylglycerol + a 1,2-diacyl-sn-glycero-3-phosphocholine = a triacylglycerol + a 1-acyl-sn-glycero-3-phosphocholine. It catalyses the reaction a 1-O-alkyl-2-acyl-sn-glycero-3-phosphocholine + a 1,2-diacylglycerol = a 1-O-alkyl-sn-glycero-3-phosphocholine + a triacylglycerol. The catalysed reaction is a 2-acylglycerol + an acyl-CoA = a 1,2-diacylglycerol + CoA. The enzyme catalyses an acyl-CoA + a 1,2-diacyl-sn-glycerol = a triacyl-sn-glycerol + CoA. It carries out the reaction 2-(9Z-octadecenoyl)-glycerol + (9Z)-octadecenoyl-CoA = 1,2-di-(9Z-octadecenoyl)-glycerol + CoA. It catalyses the reaction 1,2-di-(9Z-octadecenoyl)-sn-glycerol + (9Z)-octadecenoyl-CoA = 1,2,3-tri-(9Z-octadecenoyl)-glycerol + CoA. With respect to regulation, acyltransferase activity is specifically inhibited by TMX1 at the endoplasmic reticulum, restricting accumulation of triacylglycerol. In terms of biological role, catalytic subunit of the alternative triglyceride biosynthesis pathway, which mediates formation of triacylglycerol from diacylglycerol and membrane phospholipids. Synthesizes triacylglycerol at the expense of membrane phospholipids, such as phosphatidylcholine (PC) and its ether-linked form (ePC), thereby altering the composition of membranes. The alternative triglyceride biosynthesis pathway is probably required to provide the energy required for rapid growth when fuel sources are limiting. It maintains mitochondrial function during periods of extracellular lipid starvation. Can also use acyl-CoA as donor: acts as a acyl-CoA:monoacylglycerol acyltransferase (MGAT), but also shows acyl-CoA:diacylglycerol acyltransferase (DGAT) activity. The protein is DGAT1/2-independent enzyme synthesizing storage lipids (TMEM68) of Bos taurus (Bovine).